A 555-amino-acid polypeptide reads, in one-letter code: MIWVAVVITMLLFILVAKPTGIYLEKAFQGSKKLDKVFGPFEKLIFKITGVKGYNQTWKQYALSLVLLNGFMIVVVYFIFRLQGVLPLNPAHIEGMEPTLAFNTAISFMADTNLQHYSGENGLSYLSQLIGITFLMFAAPATTLAIVMAFIRGLAGKELGNFFVDFTRALTRVFLPIAFIAALVFVALGVPQTLDGAVTAQTIDGAKQSILRGPVASFVSIKELGNNGGGFFGANSTHPFENPGQMSNILQMMLMMLLPTALPFTYGRMVGNKKQGRILFVSLFMVFLLGFITITTSELHGNPVLNGMGIEHVQGSTEGKEVRFGTVFSSLYATVTTAAETGAVNTMHDTLTPIGGLVPLVNMMLNTVYGGVGAGFVNIIMYAIIAVFISGLMVGRTPEFLGKKIEGKEMKLIAVTILFHPLLILGFSALALSTSLGTDAISHSGFHGLTQVVYEYTSSAANNGSGFEGLGDNTPFWNITTGLVMFLGRYFSLITMLAVAASLKEKTVVPETVGTFRTDNGLFGGIFIGTIVIVGALTFFPMLVLGPIAEFLTLK.

A run of 10 helical transmembrane segments spans residues Ile2–Ile22, Gln60–Phe80, Ile130–Phe150, Val173–Thr193, Met246–Tyr266, Ile278–Glu298, Ala374–Val394, Leu412–Leu432, Leu483–Leu503, and Gly525–Leu545.

It belongs to the KdpA family. As to quaternary structure, the system is composed of three essential subunits: KdpA, KdpB and KdpC.

Its subcellular location is the cell membrane. Functionally, part of the high-affinity ATP-driven potassium transport (or Kdp) system, which catalyzes the hydrolysis of ATP coupled with the electrogenic transport of potassium into the cytoplasm. This subunit binds the extracellular potassium ions and delivers the ions to the membrane domain of KdpB through an intramembrane tunnel. In Bacillus mycoides (strain KBAB4) (Bacillus weihenstephanensis), this protein is Potassium-transporting ATPase potassium-binding subunit.